Reading from the N-terminus, the 344-residue chain is MQTLTIIRPDDMHLHLRDGDALKAVVPYTARQMGRAVIMPNLKPPVVSVADALAYKARIMAALPEGSAFEPLMTLYLTDQATPELVREAKAAGIVAFKLYPAGATTNSDSGVTDLFKLIPVLEEMAKQDILFLVHGEVTDPEIDIFDREAAFIERVMKPVLAQVPNLKVVFEHITTAEAARLVLEAGDNVAASVTPQHLLLNRNDLLVGGVRPHHFCLPVLKRETHRQALVAAVTGEKAHKFFLGTDSAPHAKSAKENACGCAGMFSAMTAVELYAEVFEKAGALDKLEAFASKNGARFYGIPENTDTITLVKQSQTVPASVPYGDGELVPMRAGGEIGWMVQY.

2 residues coordinate Zn(2+): His-13 and His-15. Substrate contacts are provided by residues 15 to 17 (HLR) and Asn-41. Zn(2+) contacts are provided by Lys-98, His-135, and His-173. Lys-98 carries the post-translational modification N6-carboxylysine. His-135 is a binding site for substrate. Leu-218 lines the substrate pocket. Asp-247 contacts Zn(2+). Asp-247 is an active-site residue. His-251 and Ala-263 together coordinate substrate.

The protein belongs to the metallo-dependent hydrolases superfamily. DHOase family. Class II DHOase subfamily. As to quaternary structure, homodimer. Zn(2+) is required as a cofactor.

It catalyses the reaction (S)-dihydroorotate + H2O = N-carbamoyl-L-aspartate + H(+). Its pathway is pyrimidine metabolism; UMP biosynthesis via de novo pathway; (S)-dihydroorotate from bicarbonate: step 3/3. Catalyzes the reversible cyclization of carbamoyl aspartate to dihydroorotate. In Neisseria meningitidis serogroup C / serotype 2a (strain ATCC 700532 / DSM 15464 / FAM18), this protein is Dihydroorotase.